The chain runs to 788 residues: LPS-assembly protein LptD (788 aa).

An N-terminal signal peptide occupies residues 1-24 (MKKRFPTLLATLIWTALYSQHTLA).

The protein belongs to the LptD family. In terms of assembly, component of the lipopolysaccharide transport and assembly complex. Interacts with LptE and LptA.

The protein localises to the cell outer membrane. Its function is as follows. Together with LptE, is involved in the assembly of lipopolysaccharide (LPS) at the surface of the outer membrane. The chain is LPS-assembly protein LptD from Yersinia enterocolitica serotype O:8 / biotype 1B (strain NCTC 13174 / 8081).